The sequence spans 242 residues: NAD-dependent protein deacylase 1 (242 aa).

The region spanning 1 to 242 (MDFKILKEKL…FAMKFEEKEG (242 aa)) is the Deacetylase sirtuin-type domain. An NAD(+)-binding site is contributed by 21–40 (GAGISKESGIPTFRGEDGLW). Positions 65 and 68 each coordinate substrate. 99–102 (QNVD) is an NAD(+) binding site. The active-site Proton acceptor is H117. Zn(2+) is bound by residues C125, C128, C146, and C149. Residues 186 to 188 (GTS) and E241 contribute to the NAD(+) site.

This sequence belongs to the sirtuin family. Class III subfamily. Requires Zn(2+) as cofactor.

It localises to the cytoplasm. The catalysed reaction is N(6)-acetyl-L-lysyl-[protein] + NAD(+) + H2O = 2''-O-acetyl-ADP-D-ribose + nicotinamide + L-lysyl-[protein]. It carries out the reaction N(6)-succinyl-L-lysyl-[protein] + NAD(+) + H2O = 2''-O-succinyl-ADP-D-ribose + nicotinamide + L-lysyl-[protein]. Its function is as follows. NAD-dependent lysine deacetylase and desuccinylase that specifically removes acetyl and succinyl groups on target proteins. Modulates the activities of several proteins which are inactive in their acylated form. This is NAD-dependent protein deacylase 1 from Caldanaerobacter subterraneus subsp. tengcongensis (strain DSM 15242 / JCM 11007 / NBRC 100824 / MB4) (Thermoanaerobacter tengcongensis).